The sequence spans 229 residues: MIRAIVTDIEGTTTDIRFVHNVLFPYARERLERFIRSGEQREPVNLLLNELRGEIHAPAASVDQLIETLFKFMDEDRKSPALKSIQGYIWREGYVNGDFTGHLYPDVVPALRRWSAQDIDIYIYSSGSVPAQKLLFSHSDEGDVTELLSGFFDTHVGAKRQVSSYRNISMKTGVPVHQMLFLSDIREELDAAREAGWKTVQLIRGEPDTQSTHRQVSSFDDIHPEQIPT.

Polar residues predominate over residues 208 to 218 (DTQSTHRQVSS). The disordered stretch occupies residues 208–229 (DTQSTHRQVSSFDDIHPEQIPT). A compositionally biased stretch (basic and acidic residues) spans 220–229 (DDIHPEQIPT).

The protein belongs to the HAD-like hydrolase superfamily. MasA/MtnC family. As to quaternary structure, monomer. The cofactor is Mg(2+).

It catalyses the reaction 5-methylsulfanyl-2,3-dioxopentyl phosphate + H2O = 1,2-dihydroxy-5-(methylsulfanyl)pent-1-en-3-one + phosphate. It functions in the pathway amino-acid biosynthesis; L-methionine biosynthesis via salvage pathway; L-methionine from S-methyl-5-thio-alpha-D-ribose 1-phosphate: step 3/6. It participates in amino-acid biosynthesis; L-methionine biosynthesis via salvage pathway; L-methionine from S-methyl-5-thio-alpha-D-ribose 1-phosphate: step 4/6. Functionally, bifunctional enzyme that catalyzes the enolization of 2,3-diketo-5-methylthiopentyl-1-phosphate (DK-MTP-1-P) into the intermediate 2-hydroxy-3-keto-5-methylthiopentenyl-1-phosphate (HK-MTPenyl-1-P), which is then dephosphorylated to form the acireductone 1,2-dihydroxy-3-keto-5-methylthiopentene (DHK-MTPene). This chain is Enolase-phosphatase E1, found in Cronobacter sakazakii (strain ATCC BAA-894) (Enterobacter sakazakii).